We begin with the raw amino-acid sequence, 563 residues long: Pyruvate decarboxylase isozyme 3 (563 aa).

Ser2 carries the post-translational modification N-acetylserine. Positions 28 and 115 each coordinate pyruvate. Lys212 participates in a covalent cross-link: Glycyl lysine isopeptide (Lys-Gly) (interchain with G-Cter in ubiquitin). Ser223 bears the Phosphoserine mark. Residue Lys233 forms a Glycyl lysine isopeptide (Lys-Gly) (interchain with G-Cter in ubiquitin) linkage. The residue at position 266 (Thr266) is a Phosphothreonine. Lys269 participates in a covalent cross-link: Glycyl lysine isopeptide (Lys-Gly) (interchain with G-Cter in ubiquitin). Thr353 carries the post-translational modification Phosphothreonine. Thiamine diphosphate contacts are provided by residues Thr390 and 413 to 415 (GSI). Asp444 is a Mg(2+) binding site. Residues 445 to 446 (GS) and 471 to 476 (NDGYTI) contribute to the thiamine diphosphate site. Positions 471 and 473 each coordinate Mg(2+). Pyruvate is bound at residue Glu477. Lys505 is covalently cross-linked (Glycyl lysine isopeptide (Lys-Gly) (interchain with G-Cter in ubiquitin)). Position 522 is a phosphothreonine (Thr522).

It belongs to the TPP enzyme family. As to quaternary structure, homotetramer. Requires Mg(2+) as cofactor. Thiamine diphosphate is required as a cofactor.

Its subcellular location is the cytoplasm. It carries out the reaction pyruvate + H(+) = acetaldehyde + CO2. The catalysed reaction is 3-methyl-2-oxobutanoate + H(+) = 2-methylpropanal + CO2. The enzyme catalyses (S)-3-methyl-2-oxopentanoate + H(+) = 2-methylbutanal + CO2. It catalyses the reaction indole-3-pyruvate + H(+) = indole-3-acetaldehyde + CO2. It carries out the reaction 3-phenylpyruvate + H(+) = 2-phenylacetaldehyde + CO2. The catalysed reaction is 2-oxobutanoate + H(+) = propanal + CO2. The enzyme catalyses 2-oxopentanoate + H(+) = butanal + CO2. It catalyses the reaction 2 acetaldehyde = acetoin. It carries out the reaction acetaldehyde + pyruvate + H(+) = acetoin + CO2. It functions in the pathway fermentation; ethanol fermentation. It participates in amino-acid degradation; Ehrlich pathway. In terms of biological role, minor of three pyruvate decarboxylases (PDC1, PDC5, PDC6) implicated in the nonoxidative conversion of pyruvate to acetaldehyde and carbon dioxide during alcoholic fermentation. Most of the produced acetaldehyde is subsequently reduced to ethanol, but some is required for cytosolic acetyl-CoA production for biosynthetic pathways. The enzyme is also one of five 2-oxo acid decarboxylases (PDC1, PDC5, PDC6, ARO10, and THI3) able to decarboxylate more complex 2-oxo acids (alpha-keto-acids) than pyruvate, which seem mainly involved in amino acid catabolism. Here the enzyme catalyzes the decarboxylation of amino acids, which, in a first step, have been transaminated to the corresponding 2-oxo acids. In a third step, the resulting aldehydes are reduced to alcohols, collectively referred to as fusel oils or alcohols. Its preferred substrates are the transaminated amino acids derived from threonine (2-oxobutanoate), norvaline (2-oxopentanoate), valine (3-methyl-2-oxobutanoate, also alpha-keto-isovalerate), isoleucine ((3S)-3-methyl-2-oxopentanoate, also alpha-keto-beta-methylvalerate), phenylalanine (phenylpyruvate), and tryptophan (3-(indol-3-yl)pyruvate), whereas transaminated leucine is no substrate. In a side-reaction the carbanionic intermediate (or active aldehyde) generated by decarboxylation or by activation of an aldehyde can react with an aldehyde via condensation (or carboligation) yielding a 2-hydroxy ketone, collectively called acyloins. The expression level of this protein in the presence of fermentable carbon sources is so low that it cannot compensate for the other two pyruvate decarboxylases to sustain fermentation. This Saccharomyces cerevisiae (strain ATCC 204508 / S288c) (Baker's yeast) protein is Pyruvate decarboxylase isozyme 3 (PDC6).